The sequence spans 504 residues: Zinc finger CCCH-type with G patch domain-containing protein (504 aa).

The disordered stretch occupies residues L95–G121. Residues D107–D118 are compositionally biased toward acidic residues. Residues K165–V191 form a C3H1-type zinc finger. The G-patch domain occupies T308–E354.

Its subcellular location is the nucleus. In terms of biological role, transcription repressor that specifically binds the 5'-GGAG[GA]A[GA]A-3' consensus sequence. Represses transcription by recruiting the chromatin multiprotein complex NuRD to target promoters. Negatively regulates expression of EGFR, a gene involved in cell proliferation, survival and migration. The polypeptide is Zinc finger CCCH-type with G patch domain-containing protein (zgpat) (Danio rerio (Zebrafish)).